We begin with the raw amino-acid sequence, 110 residues long: Ubiquitin-related modifier 1 (110 aa).

Gly-110 carries the 1-thioglycine modification. A Glycyl lysine isopeptide (Gly-Lys) (interchain with K-? in acceptor proteins) cross-link involves residue Gly-110.

It belongs to the URM1 family. Homodimer; homodimerization may provide an autoprotection to the highly active C-terminal residue before attacking its substrates. Forms a conjugate with the target protein AHP1. C-terminal thiocarboxylation occurs in 2 steps, it is first acyl-adenylated (-COAMP) via the hesA/moeB/thiF part of UBA4, then thiocarboxylated (-COSH) via the rhodanese domain of UBA4.

Its subcellular location is the cytoplasm. It participates in tRNA modification; 5-methoxycarbonylmethyl-2-thiouridine-tRNA biosynthesis. In terms of biological role, acts as a sulfur carrier required for 2-thiolation of mcm(5)S(2)U at tRNA wobble positions of cytosolic tRNA(Lys), tRNA(Glu) and tRNA(Gln). Serves as sulfur donor in tRNA 2-thiolation reaction by being thiocarboxylated (-COSH) at its C-terminus by the MOCS3 homolog UBA4. The sulfur is then transferred to tRNA to form 2-thiolation of mcm(5)S(2)U. Prior mcm(5) tRNA modification by the elongator complex is required for 2-thiolation. Also acts as a ubiquitin-like protein (UBL) that is covalently conjugated via an isopeptide bond to lysine residues of target proteins such as AHP1. Conjugation does not depend on the canonical cascade of E2 ubiquitin-conjugating enzymes and/or E3 ligases. The conjugation reaction requires a thiocarboxylated C-terminus of URM1 and a peroxidatic cysteine in the target protein, as the sulfur atom of the URM1 thiocarboxyl group is transferred to redox-active cysteine residues in the target protein. Oxidative stress specifically induces the formation of UBL-protein conjugates. Covalent modification with URM1 promotes the phase separation of a wide range of proteins into condensates like stress granules. In Chaetomium thermophilum (strain DSM 1495 / CBS 144.50 / IMI 039719) (Thermochaetoides thermophila), this protein is Ubiquitin-related modifier 1.